A 130-amino-acid chain; its full sequence is Small ribosomal subunit protein uS9 (130 aa).

Belongs to the universal ribosomal protein uS9 family.

In Burkholderia thailandensis (strain ATCC 700388 / DSM 13276 / CCUG 48851 / CIP 106301 / E264), this protein is Small ribosomal subunit protein uS9.